The sequence spans 305 residues: Serine/threonine-protein phosphatase PP-X isozyme 2 (305 aa).

Residues Asp-51, His-53, Asp-79, and Asn-111 each coordinate Mn(2+). His-112 functions as the Proton donor in the catalytic mechanism. Mn(2+) is bound by residues His-161 and His-236.

Belongs to the PPP phosphatase family. PP-4 (PP-X) subfamily. The cofactor is Mn(2+). Ubiquitous, mostly expressed in root mersitems, flowers, and vascular tissues.

Its subcellular location is the plastid stroma. It catalyses the reaction O-phospho-L-seryl-[protein] + H2O = L-seryl-[protein] + phosphate. The catalysed reaction is O-phospho-L-threonyl-[protein] + H2O = L-threonyl-[protein] + phosphate. In Arabidopsis thaliana (Mouse-ear cress), this protein is Serine/threonine-protein phosphatase PP-X isozyme 2 (PPX2).